We begin with the raw amino-acid sequence, 364 residues long: Lysophosphatidic acid receptor 1 (364 aa).

At 1-50 (MAAISTSIPVISQPQFTAMNEPQCFYNESIAFFYNRSGKHLATEWNTVSK) the chain is on the extracellular side. Disulfide bonds link Cys-24–Cys-190 and Cys-188–Cys-195. Residues Asn-27 and Asn-35 are each glycosylated (N-linked (GlcNAc...) asparagine). Lys-39 serves as a coordination point for a 1-acyl-sn-glycero-3-phosphate. The helical transmembrane segment at 51 to 75 (LVMGLGITVCIFIMLANLLVMVAIY) threads the bilayer. Residues 76–83 (VNRRFHFP) are Cytoplasmic-facing. Residues 84 to 107 (IYYLMANLAAADFFAGLAYFYLMF) traverse the membrane as a helical segment. Residues 108–121 (NTGPNTRRLTVSTW) are Extracellular-facing. The chain crosses the membrane as a helical span at residues 122–144 (LLRQGLIDTSLTASVANLLAIAI). A 1-acyl-sn-glycero-3-phosphate is bound at residue 124-129 (RQGLID). Topologically, residues 145 to 163 (ERHITVFRMQLHTRMSNRR) are cytoplasmic. Residues 164-184 (VVVVIVVIWTMAIVMGAIPSV) traverse the membrane as a helical segment. The Extracellular segment spans residues 185 to 204 (GWNCICDIENCSNMAPLYSD). A helical membrane pass occupies residues 205–225 (SYLVFWAIFNLVTFVVMVVLY). Trp-210 contacts a 1-acyl-sn-glycero-3-phosphate. Topologically, residues 226-255 (AHIFGYVRQRTMRMSRHSSGPRRNRDTMMS) are cytoplasmic. Residues 256-280 (LLKTVVIVLGAFIICWTPGLVLLLL) form a helical membrane-spanning segment. Residues 281–294 (DVCCPQCDVLAYEK) lie on the Extracellular side of the membrane. The cysteines at positions 284 and 287 are disulfide-linked. A helical transmembrane segment spans residues 295–315 (FFLLLAEFNSAMNPIIYSYRD). Over 316–364 (KEMSATFRQILCCQRSENPTGPTEGSDRSASSLNHTILAGVHSNDHSVV) the chain is Cytoplasmic. Position 341 is a phosphoserine (Ser-341). Thr-351 bears the Phosphothreonine mark.

The protein belongs to the G-protein coupled receptor 1 family. Interacts with RALA and GRK2. Interacts with GNAQ and GNA13. Interacts with CD14; the interaction is enhanced by exposure to bacterial lipopolysaccharide (LPS). In terms of processing, N-glycosylated. Expressed in many adult organs, including brain, heart, colon, small intestine, placenta, prostate, ovary, pancreas, testes, spleen, skeletal muscle, and kidney. Little or no expression in liver, lung, thymus, or peripheral blood leukocytes. Detected in lung fibroblasts from bronchoalveolar fluid from patients with idiopathic pulmonary fibrosis. Detected in bone marrow-derived mesenchymal stem cells.

The protein resides in the cell surface. The protein localises to the cell membrane. Its subcellular location is the endosome. In terms of biological role, receptor for lysophosphatidic acid (LPA). Plays a role in the reorganization of the actin cytoskeleton, cell migration, differentiation and proliferation, and thereby contributes to the responses to tissue damage and infectious agents. Activates downstream signaling cascades via the G(i)/G(o), G(12)/G(13), and G(q) families of heteromeric G proteins. Signaling inhibits adenylyl cyclase activity and decreases cellular cAMP levels. Signaling triggers an increase of cytoplasmic Ca(2+) levels. Activates RALA; this leads to the activation of phospholipase C (PLC) and the formation of inositol 1,4,5-trisphosphate. Signaling mediates activation of down-stream MAP kinases. Contributes to the regulation of cell shape. Promotes Rho-dependent reorganization of the actin cytoskeleton in neuronal cells and neurite retraction. Promotes the activation of Rho and the formation of actin stress fibers. Promotes formation of lamellipodia at the leading edge of migrating cells via activation of RAC1. Through its function as LPA receptor, plays a role in chemotaxis and cell migration, including responses to injury and wounding. Plays a role in triggering inflammation in response to bacterial lipopolysaccharide (LPS) via its interaction with CD14. Promotes cell proliferation in response to LPA. Inhibits the intracellular ciliogenesis pathway in response to LPA and through AKT1 activation. Required for normal skeleton development. May play a role in osteoblast differentiation. Required for normal brain development. Required for normal proliferation, survival and maturation of newly formed neurons in the adult dentate gyrus. Plays a role in pain perception and in the initiation of neuropathic pain. The sequence is that of Lysophosphatidic acid receptor 1 (LPAR1) from Homo sapiens (Human).